The primary structure comprises 394 residues: Elongation factor Tu (394 aa).

The tr-type G domain occupies 10 to 204 (KPHVNVGTIG…HLDNYIPEPE (195 aa)). The segment at 19–26 (GHVDHGKT) is G1. 19-26 (GHVDHGKT) serves as a coordination point for GTP. T26 provides a ligand contact to Mg(2+). Residues 60-64 (GITIN) are G2. The tract at residues 81 to 84 (DCPG) is G3. Residues 81–85 (DCPGH) and 136–139 (NKCD) contribute to the GTP site. Residues 136–139 (NKCD) form a G4 region. Residues 174–176 (SAL) are G5.

This sequence belongs to the TRAFAC class translation factor GTPase superfamily. Classic translation factor GTPase family. EF-Tu/EF-1A subfamily. In terms of assembly, monomer.

Its subcellular location is the cytoplasm. The catalysed reaction is GTP + H2O = GDP + phosphate + H(+). Functionally, GTP hydrolase that promotes the GTP-dependent binding of aminoacyl-tRNA to the A-site of ribosomes during protein biosynthesis. The sequence is that of Elongation factor Tu from Histophilus somni (strain 129Pt) (Haemophilus somnus).